The primary structure comprises 227 residues: NAD(P)H-quinone oxidoreductase subunit K, chloroplastic (227 aa).

Cys43, Cys44, Cys108, and Cys139 together coordinate [4Fe-4S] cluster.

Belongs to the complex I 20 kDa subunit family. NDH is composed of at least 16 different subunits, 5 of which are encoded in the nucleus. It depends on [4Fe-4S] cluster as a cofactor.

The protein resides in the plastid. Its subcellular location is the chloroplast thylakoid membrane. It catalyses the reaction a plastoquinone + NADH + (n+1) H(+)(in) = a plastoquinol + NAD(+) + n H(+)(out). It carries out the reaction a plastoquinone + NADPH + (n+1) H(+)(in) = a plastoquinol + NADP(+) + n H(+)(out). In terms of biological role, NDH shuttles electrons from NAD(P)H:plastoquinone, via FMN and iron-sulfur (Fe-S) centers, to quinones in the photosynthetic chain and possibly in a chloroplast respiratory chain. The immediate electron acceptor for the enzyme in this species is believed to be plastoquinone. Couples the redox reaction to proton translocation, and thus conserves the redox energy in a proton gradient. The protein is NAD(P)H-quinone oxidoreductase subunit K, chloroplastic of Citrus sinensis (Sweet orange).